Reading from the N-terminus, the 158-residue chain is uncharacterized protein (158 aa).

This is an uncharacterized protein from Caenorhabditis elegans.